Consider the following 234-residue polypeptide: Large ribosomal subunit protein uL1 (234 aa).

It belongs to the universal ribosomal protein uL1 family. Part of the 50S ribosomal subunit.

In terms of biological role, binds directly to 23S rRNA. The L1 stalk is quite mobile in the ribosome, and is involved in E site tRNA release. Its function is as follows. Protein L1 is also a translational repressor protein, it controls the translation of the L11 operon by binding to its mRNA. In Desulfatibacillum aliphaticivorans, this protein is Large ribosomal subunit protein uL1.